Reading from the N-terminus, the 411-residue chain is S-adenosylmethionine synthase (411 aa).

Position 15 (His15) interacts with ATP. Asp17 contributes to the Mg(2+) binding site. Glu43 is a binding site for K(+). L-methionine-binding residues include Glu56 and Gln99. The tract at residues 99–109 is flexible loop; it reads QSPDIAQGVDT. Residues 174–176, 247–248, Asp256, 262–263, Ala279, and Lys283 contribute to the ATP site; these read DGK, RF, and RK. Asp256 lines the L-methionine pocket. Lys287 contacts L-methionine.

It belongs to the AdoMet synthase family. As to quaternary structure, homotetramer; dimer of dimers. The cofactor is Mg(2+). K(+) serves as cofactor.

It localises to the cytoplasm. The enzyme catalyses L-methionine + ATP + H2O = S-adenosyl-L-methionine + phosphate + diphosphate. It participates in amino-acid biosynthesis; S-adenosyl-L-methionine biosynthesis; S-adenosyl-L-methionine from L-methionine: step 1/1. In terms of biological role, catalyzes the formation of S-adenosylmethionine (AdoMet) from methionine and ATP. The overall synthetic reaction is composed of two sequential steps, AdoMet formation and the subsequent tripolyphosphate hydrolysis which occurs prior to release of AdoMet from the enzyme. The protein is S-adenosylmethionine synthase of Streptomyces spectabilis.